Reading from the N-terminus, the 171-residue chain is uncharacterized protein (171 aa).

Residues alanine 30–leucine 97 form the HTH gntR-type domain. Residues glutamate 57–alanine 76 constitute a DNA-binding region (H-T-H motif).

This is an uncharacterized protein from Agrobacterium vitis (Rhizobium vitis).